Consider the following 361-residue polypeptide: Phospho-N-acetylmuramoyl-pentapeptide-transferase (361 aa).

Helical transmembrane passes span 25–45 (RGIL…PAVI), 73–93 (TMGG…WGDL), 98–118 (VWLV…DDWI), 139–159 (IFGL…AAIT), 168–188 (IALP…IVGF), 200–220 (GLAI…AYAS), 237–257 (AGEL…FLWF), 264–284 (VFMG…IAVI), 289–309 (MVLV…IIQV), and 339–359 (VIVR…ATLK).

This sequence belongs to the glycosyltransferase 4 family. MraY subfamily. Mg(2+) serves as cofactor.

The protein resides in the cell inner membrane. It carries out the reaction UDP-N-acetyl-alpha-D-muramoyl-L-alanyl-gamma-D-glutamyl-meso-2,6-diaminopimeloyl-D-alanyl-D-alanine + di-trans,octa-cis-undecaprenyl phosphate = di-trans,octa-cis-undecaprenyl diphospho-N-acetyl-alpha-D-muramoyl-L-alanyl-D-glutamyl-meso-2,6-diaminopimeloyl-D-alanyl-D-alanine + UMP. Its pathway is cell wall biogenesis; peptidoglycan biosynthesis. In terms of biological role, catalyzes the initial step of the lipid cycle reactions in the biosynthesis of the cell wall peptidoglycan: transfers peptidoglycan precursor phospho-MurNAc-pentapeptide from UDP-MurNAc-pentapeptide onto the lipid carrier undecaprenyl phosphate, yielding undecaprenyl-pyrophosphoryl-MurNAc-pentapeptide, known as lipid I. This chain is Phospho-N-acetylmuramoyl-pentapeptide-transferase, found in Xanthomonas oryzae pv. oryzae (strain MAFF 311018).